A 31-amino-acid polypeptide reads, in one-letter code: Photosystem II reaction center protein Psb30 (31 aa).

The helical transmembrane segment at 5–25 (IQLTSLLLIVIAGPLVIALLF) threads the bilayer.

It belongs to the Psb30/Ycf12 family. PSII is composed of 1 copy each of membrane proteins PsbA, PsbB, PsbC, PsbD, PsbE, PsbF, PsbH, PsbI, PsbJ, PsbK, PsbL, PsbM, PsbT, PsbX, PsbY, PsbZ, Psb30/Ycf12, peripheral proteins of the oxygen-evolving complex and a large number of cofactors. It forms dimeric complexes.

It localises to the plastid. The protein localises to the chloroplast thylakoid membrane. A core subunit of photosystem II (PSII), probably helps stabilize the reaction center. The protein is Photosystem II reaction center protein Psb30 of Phacus acuminatus.